Consider the following 311-residue polypeptide: Methionyl-tRNA formyltransferase (311 aa).

110–113 (SLLP) provides a ligand contact to (6S)-5,6,7,8-tetrahydrofolate.

Belongs to the Fmt family.

The enzyme catalyses L-methionyl-tRNA(fMet) + (6R)-10-formyltetrahydrofolate = N-formyl-L-methionyl-tRNA(fMet) + (6S)-5,6,7,8-tetrahydrofolate + H(+). Attaches a formyl group to the free amino group of methionyl-tRNA(fMet). The formyl group appears to play a dual role in the initiator identity of N-formylmethionyl-tRNA by promoting its recognition by IF2 and preventing the misappropriation of this tRNA by the elongation apparatus. This chain is Methionyl-tRNA formyltransferase, found in Streptococcus pyogenes serotype M6 (strain ATCC BAA-946 / MGAS10394).